The primary structure comprises 703 residues: Leucine zipper putative tumor suppressor 3 (703 aa).

Disordered regions lie at residues 1-22 (MAPA…PHLF), 40-190 (RADP…SEPL), and 204-347 (FHSM…PPSP). Residues 96 to 107 (GSFPGPRSSGSG) are compositionally biased toward low complexity. The segment covering 109–124 (NRERPGPGRYPSEDKV) has biased composition (basic and acidic residues). Over residues 205-218 (HSMQNLCPPQTNGT) the composition is skewed to polar residues. Low complexity predominate over residues 251 to 268 (DSGRNSLTSLPTYSSSYS). A compositionally biased stretch (gly residues) spans 290-299 (SSGGGGGGSG). The segment covering 304–324 (GTSDSGRASSKSGSSSSMGRS) has biased composition (low complexity). Gly residues predominate over residues 325–336 (GHLGSGEGGNGG). Phosphoserine occurs at positions 346 and 348. Coiled-coil stretches lie at residues 348-526 (SALI…SLRD) and 600-669 (TRAL…RLRE). Residues 665-703 (RRLRERGAAGGSRTPTPQHGEEEKAWTPSRLERIESTEI) form a disordered region. The span at 683–703 (HGEEEKAWTPSRLERIESTEI) shows a compositional bias: basic and acidic residues.

Belongs to the LZTS3 family. As to quaternary structure, interacts (via C-terminus) with SHANK3 (via PDZ domain). Interacts (via coiled coil) with SIPA1L1. Can form homooligomers. In terms of tissue distribution, detected in brain, with highest expression in brain cortex, caudate putamen, cerebellum and hippocampus. Detected in neuropil (at protein level). Detected in brain and kidney.

The protein localises to the synapse. Its subcellular location is the postsynaptic density. It localises to the cell projection. The protein resides in the dendritic spine. It is found in the dendrite. The protein localises to the cytoplasm. Its subcellular location is the cytoskeleton. Functionally, may be involved in promoting the maturation of dendritic spines, probably via regulating SIPA1L1 levels at the postsynaptic density of synapses. This chain is Leucine zipper putative tumor suppressor 3, found in Rattus norvegicus (Rat).